The primary structure comprises 153 residues: MAPRTDAWSSALRLLSRREYSEAMLRERLQRKGFDSDQIEHALERCRSYNYVNDERFARIRARQLLASGRAVGPALMADLRHQRIGDSIARKAINDLEEEFSQAEILKDLCQRRFPDFDFQTADDRSRRRVFNYLRRRGFASAVLFQYFSEER.

This sequence belongs to the RecX family.

Its subcellular location is the cytoplasm. In terms of biological role, modulates RecA activity. This chain is Regulatory protein RecX, found in Syntrophotalea carbinolica (strain DSM 2380 / NBRC 103641 / GraBd1) (Pelobacter carbinolicus).